The primary structure comprises 201 residues: 3-isopropylmalate dehydratase small subunit (201 aa).

The protein belongs to the LeuD family. LeuD type 1 subfamily. Heterodimer of LeuC and LeuD.

The enzyme catalyses (2R,3S)-3-isopropylmalate = (2S)-2-isopropylmalate. Its pathway is amino-acid biosynthesis; L-leucine biosynthesis; L-leucine from 3-methyl-2-oxobutanoate: step 2/4. Its function is as follows. Catalyzes the isomerization between 2-isopropylmalate and 3-isopropylmalate, via the formation of 2-isopropylmaleate. This chain is 3-isopropylmalate dehydratase small subunit, found in Shewanella putrefaciens (strain CN-32 / ATCC BAA-453).